The chain runs to 151 residues: Phosphoribosyl-AMP cyclohydrolase (151 aa).

A compositionally biased stretch (polar residues) spans 1–13; the sequence is MMTLTFASPPQNK. The disordered stretch occupies residues 1–20; sequence MMTLTFASPPQNKSDLETGP. D93 is a binding site for Mg(2+). C94 is a binding site for Zn(2+). Residues D95 and D97 each contribute to the Mg(2+) site. Residues C112 and C119 each coordinate Zn(2+).

It belongs to the PRA-CH family. In terms of assembly, homodimer. The cofactor is Mg(2+). It depends on Zn(2+) as a cofactor.

The protein localises to the cytoplasm. The enzyme catalyses 1-(5-phospho-beta-D-ribosyl)-5'-AMP + H2O = 1-(5-phospho-beta-D-ribosyl)-5-[(5-phospho-beta-D-ribosylamino)methylideneamino]imidazole-4-carboxamide. It participates in amino-acid biosynthesis; L-histidine biosynthesis; L-histidine from 5-phospho-alpha-D-ribose 1-diphosphate: step 3/9. Its function is as follows. Catalyzes the hydrolysis of the adenine ring of phosphoribosyl-AMP. This Sinorhizobium medicae (strain WSM419) (Ensifer medicae) protein is Phosphoribosyl-AMP cyclohydrolase.